The chain runs to 430 residues: MTSVVVVGTQWGDEGKGKITDFLSANAEVIARYQGGDNAGHTIVIDGKKYKLHLIPSGIFFPEKISVIGNGMVVNPKSLVKELNYLHEEGVTTDNLRISDRAHVILPYHIELDRLQEEAKGDNKIGTTIKGIGPAYMDKAARVGIRIADLLDKDIFRERLERNLTEKNRLFEKLYDSTAISFDDIFEEYYEYGQQIKQYVTDTSVILNDALDQGKRVLFEGAQGVMLDIDQGTYPFVTSSNPVAGGVTIGSGVGPSKIDKVVGVCKAYTSRVGDGPFPTELFDEVGNRIRDIGHEYGTTTGRPRRVGWFDSVVMRHSRRVSGITNLSLNSIDVLSGLDTVKICVAYDLDGQRIDHYPASLEQLKRCKPIYEELPGWPEDITGVRSLEDLPENARNYVRRVSELVGVRISTFSVGPGREQTNILESVWSNL.

Residues 12–18 (GDEGKGK) and 40–42 (GHT) each bind GTP. Asp-13 serves as the catalytic Proton acceptor. Mg(2+)-binding residues include Asp-13 and Gly-40. IMP is bound by residues 13 to 16 (DEGK), 38 to 41 (NAGH), Thr-128, Arg-142, Gln-223, Thr-238, and Arg-302. The Proton donor role is filled by His-41. Residue 298–304 (TTTGRPR) participates in substrate binding. Residues Arg-304, 330 to 332 (SID), and 412 to 414 (SVG) contribute to the GTP site.

Belongs to the adenylosuccinate synthetase family. As to quaternary structure, homodimer. Mg(2+) serves as cofactor.

The protein localises to the cytoplasm. The enzyme catalyses IMP + L-aspartate + GTP = N(6)-(1,2-dicarboxyethyl)-AMP + GDP + phosphate + 2 H(+). The protein operates within purine metabolism; AMP biosynthesis via de novo pathway; AMP from IMP: step 1/2. Its function is as follows. Plays an important role in the de novo pathway of purine nucleotide biosynthesis. Catalyzes the first committed step in the biosynthesis of AMP from IMP. The polypeptide is Adenylosuccinate synthetase (Streptococcus sanguinis (strain SK36)).